Consider the following 335-residue polypeptide: L-threo-3-deoxy-hexylosonate aldolase (335 aa).

50 to 51 (SN) is a substrate binding site. Residue Lys175 is the Schiff-base intermediate with substrate of the active site.

This sequence belongs to the DapA family.

It carries out the reaction 2-dehydro-3-deoxy-L-galactonate = L-glyceraldehyde + pyruvate. Its pathway is carbohydrate acid metabolism. In terms of biological role, mediates the conversion of 2-dehydro-3-deoxy-L-galactonate to pyruvate and L-glyceraldehyde in D-galacturonate catabolic process. This is L-threo-3-deoxy-hexylosonate aldolase (gaaC) from Aspergillus niger.